The sequence spans 401 residues: MSHRKFSAPRHGHMGFTPKKRSRTYRGRIKAFPKDDKSKPIHLTAFLGYKAGMTHIVRDVDKPGSKVNKKEVVEAVTIVETPPMVIAGVTGYVDTPQGPRALTTIWAEHLSEEARRRFYSNWAKSKKKAFTKYAKKWQDEDGKKLIEADFAKLKKYCSSIRVIAHTQMKILRRRQKKAHLVEIQVNGGTIEQKVDWAREHLEKQVQVDTVFAQDEMIDTIGVTRGHGFKGVTSRWHTKKLPRKTHKGLRKVACIGAWHPSRVAFTVARAGQKGFHHRTIINNKIYRIGKSALTEEGKNNGSTEFDLTQKTITPMGGFPRYGIVNQDYIMLRGAVLGPKKRLITLRKSLITQTKRVAHEKINLKWIDTSSKTGHGRFQTTAEKRAFMGKLKRDFLAEAEAKA.

Positions 1-22 (MSHRKFSAPRHGHMGFTPKKRS) are disordered.

Belongs to the universal ribosomal protein uL3 family.

The protein resides in the cytoplasm. In terms of biological role, the L3 protein is a component of the large subunit of cytoplasmic ribosomes. The protein is Large ribosomal subunit protein uL3 (rpl-3) of Caenorhabditis elegans.